The primary structure comprises 260 residues: Nuclear shuttle protein (260 aa).

Residues 1–29 (MRRGAYTPRSTPFPRDRRSYNAGKGRSFR) form a disordered region. The Bipartite nuclear localization signal signature appears at 21–42 (NAGKGRSFRSYRRRGPVRPLAR). A Nuclear localization signal motif is present at residues 84–100 (VKTRALSDNRVGDYIKL). The interval 154–191 (QLFGSINASYADLSIQDPYKDRFTVIRQVSYPVNTEKG) is interaction with Arabidopsis thaliana NSI protein.

Belongs to the begomovirus nuclear shuttle protein family. As to quaternary structure, binds to single-stranded and double-stranded viral DNA. Interacts with the host nuclear shuttle interacting (NSI) protein. This interaction may allow NSP to recruit NSI monomers to the viral genome and thus regulate nuclear export of viral genome by NSP.

Its subcellular location is the host nucleus. It is found in the host cytoplasm. The protein localises to the host cell membrane. In terms of biological role, binds to the genomic viral ssDNA, shuttles it into and out of the cell nucleus. Begomoviruses use 2 proteins to transport their DNA from cell to cell. The nuclear shuttle protein (NSP) shuttles it between nucleus and cytoplasm and the movement protein (MP) probably transports the DNA-NSP complex to the cell periphery and facilitates movement across the cell wall. This chain is Nuclear shuttle protein, found in Indian cassava mosaic virus (ICMV).